A 443-amino-acid polypeptide reads, in one-letter code: tRNA(Ile2) 2-agmatinylcytidine synthetase TiaS (443 aa).

Belongs to the TiaS family.

The protein resides in the cytoplasm. The catalysed reaction is cytidine(34) in tRNA(Ile2) + agmatine + ATP + H2O = 2-agmatinylcytidine(34) in tRNA(Ile2) + AMP + 2 phosphate + 2 H(+). In terms of biological role, ATP-dependent agmatine transferase that catalyzes the formation of 2-agmatinylcytidine (agm2C) at the wobble position (C34) of tRNA(Ile2), converting the codon specificity from AUG to AUA. This chain is tRNA(Ile2) 2-agmatinylcytidine synthetase TiaS, found in Saccharolobus islandicus (strain L.S.2.15 / Lassen #1) (Sulfolobus islandicus).